Consider the following 66-residue polypeptide: Sarcoplasmic/endoplasmic reticulum calcium ATPase regulator ARLN (66 aa).

An N-acetylmethionine modification is found at methionine 1. The disordered stretch occupies residues 1–38 (MEVDVPGVDGRDGLRERRGLSEGGRQNLDVRPQSGANG). Basic and acidic residues predominate over residues 9–20 (DGRDGLRERRGL). The chain crosses the membrane as a helical span at residues 45-65 (WLDLWLFIFFDVVVFLFVYFL).

In terms of assembly, homooligomer. Can also form heterooligomers with other sarcoplasmic/endoplasmic reticulum calcium ATPase (SERCA) regulators ERLN, PLN, SLN and STRIT1/DWORF. Monomer. Interacts as a monomer with ATP2A2/SERCA2; the interaction results in inhibition of ATP2A2 Ca(2+) affinity.

Its subcellular location is the endoplasmic reticulum membrane. Its function is as follows. Inhibits the activity of the calcium ATPases ATP2A2/SERCA2 and ATP2A3/SERCA3 by decreasing their apparent affinity for Ca(2+). This chain is Sarcoplasmic/endoplasmic reticulum calcium ATPase regulator ARLN (ARLN), found in Pongo abelii (Sumatran orangutan).